A 164-amino-acid chain; its full sequence is Disulfide bond formation protein B (164 aa).

Over 1 to 4 the chain is Cytoplasmic; the sequence is MRII. A helical transmembrane segment spans residues 5-21; it reads FLLIALICAGLVSYALY. Topologically, residues 22–39 are periplasmic; it reads LQLADGLLPCPLCIFQRM. Cys31 and Cys34 are disulfide-bonded. The chain crosses the membrane as a helical span at residues 40-56; that stretch reads AYWLVGITALFAFIHHP. The Cytoplasmic segment spans residues 57–62; that stretch reads QRLGRR. Residues 63–80 form a helical membrane-spanning segment; the sequence is IYCGLIILFSLAGAIVAG. The Periplasmic segment spans residues 81–136; it reads RQAWLVRFPEAFECGISPEEAFLNELPLARWWPDMFEANGDCTDGTWQFLSLTIPD. A disulfide bridge connects residues Cys94 and Cys122. The chain crosses the membrane as a helical span at residues 137-155; it reads WSLLIFLAFSLIAGLLWRS. The Cytoplasmic segment spans residues 156–164; the sequence is RSISSSNLK.

The protein belongs to the DsbB family.

The protein resides in the cell inner membrane. Its function is as follows. Required for disulfide bond formation in some periplasmic proteins. Acts by oxidizing the DsbA protein. The sequence is that of Disulfide bond formation protein B from Nitrosomonas europaea (strain ATCC 19718 / CIP 103999 / KCTC 2705 / NBRC 14298).